Here is a 536-residue protein sequence, read N- to C-terminus: MRFGGQRRCIESSDDNDSIDSMSIQQKNKEKEEWKWAQSLARRLEQVLNVHPEKYQNGCSSQRPSRQPSPVEQLAPIRSHSADFGRAAEMASGNSEEGKGMLLRNGDDRIRLPSPQRGTPDTSSTQGHPYTDQIVTINVSGMRFQTFESTLSRYPNSLLGDRNKRQHFFVSDTNEFFFDRHRTTSSSFTFEIRNYLFESILYIYQSGGRVKRPEIVPIDIFLKEMRFFQMGDDLLEEFWIAEGYEKPKEVMMPNNKTQRKIWELMEYPDSSLSARIIAFISIAVIALSIISFCWETVPSDIEEKPINNSATAELLDEMDEKHYSPFFWIELMCILWFTIELILRFISCPCKVTFATSVLNIIDFVAIAPFFVNFFFADTSKSNSSMSFAVLRVLRLVRVFRVFKLSRHSVGLQILGKTFRSSVQEFCLLIFFMAIALVLFASGMYFAEQGEPNSKFTSIPASFWFVLVTMTTVGYGDLVPLSPFGKVVGGMCAMIGVLTLALPVPIIVANFKHFYRQENRLASMKSKGDDADDDIA.

Disordered regions lie at residues 1–31 and 87–131; these read MRFGGQRRCIESSDDNDSIDSMSIQQKNKEK and AAEM…HPYT. Residues 1–275 are Cytoplasmic-facing; it reads MRFGGQRRCI…EYPDSSLSAR (275 aa). Positions 116–131 are enriched in polar residues; that stretch reads QRGTPDTSSTQGHPYT. A helical membrane pass occupies residues 276-296; that stretch reads IIAFISIAVIALSIISFCWET. The Extracellular segment spans residues 297 to 322; sequence VPSDIEEKPINNSATAELLDEMDEKH. The helical transmembrane segment at 323–343 threads the bilayer; it reads YSPFFWIELMCILWFTIELIL. At 344 to 356 the chain is on the cytoplasmic side; it reads RFISCPCKVTFAT. The helical transmembrane segment at 357 to 377 threads the bilayer; that stretch reads SVLNIIDFVAIAPFFVNFFFA. At 378-425 the chain is on the extracellular side; the sequence is DTSKSNSSMSFAVLRVLRLVRVFRVFKLSRHSVGLQILGKTFRSSVQE. The chain crosses the membrane as a helical; Voltage-sensor span at residues 426–446; it reads FCLLIFFMAIALVLFASGMYF. The Cytoplasmic segment spans residues 447-458; that stretch reads AEQGEPNSKFTS. Residues 459-479 form a helical membrane-spanning segment; it reads IPASFWFVLVTMTTVGYGDLV. At 480-486 the chain is on the extracellular side; the sequence is PLSPFGK. A helical membrane pass occupies residues 487-507; sequence VVGGMCAMIGVLTLALPVPII. The Cytoplasmic portion of the chain corresponds to 508–536; it reads VANFKHFYRQENRLASMKSKGDDADDDIA.

The protein belongs to the potassium channel family. A (Shaker) (TC 1.A.1.2) subfamily. Shaker sub-subfamily. Expressed in a variety of interneurons and sensory neurons, as well as body wall muscle.

The protein localises to the membrane. Functionally, mediates the voltage-dependent potassium ion permeability of excitable membranes. Has an important role in repolarization and in regulating the pattern of action potential firing. Isoform a expresses currents in a more depolarized voltage range than isoform d. This Caenorhabditis elegans protein is Potassium voltage-gated channel protein shk-1.